The primary structure comprises 818 residues: Dipeptidyl-peptidase 7 (818 aa).

An N-terminal signal peptide occupies residues 1–22 (MKLKRILLSVALLCGIGTTAMA). Residues His-87, Asp-223, and Ser-645 each act as charge relay system in the active site.

Belongs to the peptidase S46 family.

In terms of biological role, catalyzes the removal of dipeptides from the N-terminus of oligopeptides. Most efficiently cleaves the synthetic substrate Met-Leu-methylcoumaryl-7-amide (Met-Leu-MCA), and slowly hydrolyzes Leu-Gln-, Lys-Ala-, Leu-Arg, and Ala-Asn-MCA. Is likely involved in amino acid metabolism and bacterial growth/survival of asaccharolytic P.endodontalis, that utilizes amino acids from extracellular proteinaceous nutrients as energy and carbon sources. The sequence is that of Dipeptidyl-peptidase 7 from Porphyromonas endodontalis (strain ATCC 35406 / DSM 24491 / JCM 8526 / CCUG 16442 / BCRC 14492 / NCTC 13058 / HG 370) (Bacteroides endodontalis).